We begin with the raw amino-acid sequence, 102 residues long: Small ribosomal subunit protein uS10 (102 aa).

Belongs to the universal ribosomal protein uS10 family. In terms of assembly, part of the 30S ribosomal subunit.

Its function is as follows. Involved in the binding of tRNA to the ribosomes. The polypeptide is Small ribosomal subunit protein uS10 (Lacticaseibacillus casei (strain BL23) (Lactobacillus casei)).